A 445-amino-acid polypeptide reads, in one-letter code: Gamma-glutamyl phosphate reductase (445 aa).

The protein belongs to the gamma-glutamyl phosphate reductase family.

The protein localises to the cytoplasm. The catalysed reaction is L-glutamate 5-semialdehyde + phosphate + NADP(+) = L-glutamyl 5-phosphate + NADPH + H(+). It functions in the pathway amino-acid biosynthesis; L-proline biosynthesis; L-glutamate 5-semialdehyde from L-glutamate: step 2/2. Its function is as follows. Catalyzes the NADPH-dependent reduction of L-glutamate 5-phosphate into L-glutamate 5-semialdehyde and phosphate. The product spontaneously undergoes cyclization to form 1-pyrroline-5-carboxylate. This chain is Gamma-glutamyl phosphate reductase, found in Saccharopolyspora erythraea (strain ATCC 11635 / DSM 40517 / JCM 4748 / NBRC 13426 / NCIMB 8594 / NRRL 2338).